Consider the following 334-residue polypeptide: Mediator of RNA polymerase II transcription subunit 4 (334 aa).

Residues 71–100 (QEREQLIRTLEAHVEKRDEVIQQLETNLKS) adopt a coiled-coil conformation. A disordered region spans residues 193 to 334 (PLITSPSASS…ASKKTGSSNK (142 aa)). Polar residues-rich tracts occupy residues 194–206 (LITS…SNGG) and 251–282 (NEKQ…SSPN).

This sequence belongs to the Mediator complex subunit 4 family. In terms of assembly, component of the Mediator complex.

It is found in the nucleus. Component of the Mediator complex, a coactivator involved in the regulated transcription of nearly all RNA polymerase II-dependent genes. Mediator functions as a bridge to convey information from gene-specific regulatory proteins to the basal RNA polymerase II transcription machinery. Mediator is recruited to promoters by direct interactions with regulatory proteins and serves as a scaffold for the assembly of a functional preinitiation complex with RNA polymerase II and the general transcription factors. The protein is Mediator of RNA polymerase II transcription subunit 4 (mdt-4) of Caenorhabditis elegans.